Consider the following 67-residue polypeptide: MPQLDTSTWLIMILSMILTLFITFQLKVSKHYFPTNPEPKHTPLLKNSAPWEEKWTKIYSPLSLPLQ.

The chain crosses the membrane as a helical span at residues 8–24; the sequence is TWLIMILSMILTLFITF. N6-acetyllysine; alternate is present on K54. N6-succinyllysine; alternate is present on K54. Position 57 is an N6-acetyllysine (K57).

The protein belongs to the ATPase protein 8 family. Component of the ATP synthase complex composed at least of ATP5F1A/subunit alpha, ATP5F1B/subunit beta, ATP5MC1/subunit c (homooctomer), MT-ATP6/subunit a, MT-ATP8/subunit 8, ATP5ME/subunit e, ATP5MF/subunit f, ATP5MG/subunit g, ATP5MK/subunit k, ATP5MJ/subunit j, ATP5F1C/subunit gamma, ATP5F1D/subunit delta, ATP5F1E/subunit epsilon, ATP5PF/subunit F6, ATP5PB/subunit b, ATP5PD/subunit d, ATP5PO/subunit OSCP. ATP synthase complex consists of a soluble F(1) head domain (subunits alpha(3) and beta(3)) - the catalytic core - and a membrane F(0) domain - the membrane proton channel (subunits c, a, 8, e, f, g, k and j). These two domains are linked by a central stalk (subunits gamma, delta, and epsilon) rotating inside the F1 region and a stationary peripheral stalk (subunits F6, b, d, and OSCP). Interacts with PRICKLE3.

It is found in the mitochondrion membrane. In terms of biological role, subunit 8, of the mitochondrial membrane ATP synthase complex (F(1)F(0) ATP synthase or Complex V) that produces ATP from ADP in the presence of a proton gradient across the membrane which is generated by electron transport complexes of the respiratory chain. ATP synthase complex consist of a soluble F(1) head domain - the catalytic core - and a membrane F(1) domain - the membrane proton channel. These two domains are linked by a central stalk rotating inside the F(1) region and a stationary peripheral stalk. During catalysis, ATP synthesis in the catalytic domain of F(1) is coupled via a rotary mechanism of the central stalk subunits to proton translocation. In vivo, can only synthesize ATP although its ATP hydrolase activity can be activated artificially in vitro. Part of the complex F(0) domain. The sequence is that of ATP synthase F(0) complex subunit 8 from Phoca vitulina (Harbor seal).